We begin with the raw amino-acid sequence, 418 residues long: MTLLALGINHKTAPVSLRERVSFSPDKLDQALDSLLAQPMVQAGVVLSTCNRTELYLSVEERDDLQEALIRWLCDYHNLNEDDLRNSLYWHQDNDAVSHLMRVASGLDSLVLGEPQILGQVKKAFADSQKGHMKASELERMFQKSFSVAKRVRTETDIGASAVSVAFAACTLARQIFESLSTVTVLLVGAGETIELVARHLREHKVQKMIIANRTRERAQILADEVGAEVIALSDIDERLREADIIISSTASPLPIIGKGMVERALKSRRNQPMLLVDIAVPRDVEPEVGKLANAYLYSVDDLQSIISHNLAQRKAAAVEAETIVAQEASEFMAWLRAQSASETIRDYRSQAEQVRDELTAKALAALEQGGDAQTIMQDLAWKLTNRLIHAPTKSLQQAARDGDNERLNILRDSLGLE.

Residues 49 to 52, S109, 114 to 116, and Q120 each bind substrate; these read TCNR and EPQ. C50 acts as the Nucleophile in catalysis. NADP(+) is bound at residue 189-194; the sequence is GAGETI.

Belongs to the glutamyl-tRNA reductase family. In terms of assembly, homodimer.

It carries out the reaction (S)-4-amino-5-oxopentanoate + tRNA(Glu) + NADP(+) = L-glutamyl-tRNA(Glu) + NADPH + H(+). The protein operates within porphyrin-containing compound metabolism; protoporphyrin-IX biosynthesis; 5-aminolevulinate from L-glutamyl-tRNA(Glu): step 1/2. In terms of biological role, catalyzes the NADPH-dependent reduction of glutamyl-tRNA(Glu) to glutamate 1-semialdehyde (GSA). The sequence is that of Glutamyl-tRNA reductase from Escherichia coli O6:K15:H31 (strain 536 / UPEC).